A 205-amino-acid chain; its full sequence is MGPEELLTKSGVSRETLERLRLYADLLVKWQARINLVGPDTVPDLWSRHMLDSVQLFPLIKVGARRLVDLGSGAGFPGLVLAVMGAPDVHLVESDSRKCAFLREVARVTETPVTVINKRIEQVAPLGADVVTARALAPLDRLLGWAFPHLAEGGECLFLKGRGAEDELTASAKEWNITASRVPSLTDPGGLVLHLREVSRGRAQP.

S-adenosyl-L-methionine is bound by residues Gly71, Phe76, 120 to 121 (IE), and Arg134.

Belongs to the methyltransferase superfamily. RNA methyltransferase RsmG family.

Its subcellular location is the cytoplasm. It catalyses the reaction guanosine(527) in 16S rRNA + S-adenosyl-L-methionine = N(7)-methylguanosine(527) in 16S rRNA + S-adenosyl-L-homocysteine. Specifically methylates the N7 position of guanine in position 527 of 16S rRNA. This Paramagnetospirillum magneticum (strain ATCC 700264 / AMB-1) (Magnetospirillum magneticum) protein is Ribosomal RNA small subunit methyltransferase G.